The primary structure comprises 208 residues: Histone H1t (208 aa).

The span at 1 to 16 shows a compositional bias: low complexity; that stretch reads MSETVPAASAGAVPAV. Positions 1 to 40 are disordered; that stretch reads MSETVPAASAGAVPAVMEKPLTKKRGKKPAGLTSASRKAP. The residue at position 9 (S9) is a Phosphoserine. The H15 domain maps to 40-113; it reads PNLSVSKLIT…GASGSFKLSK (74 aa). At R58 the chain carries Citrulline. The segment at 102 to 208 is disordered; it reads GTGASGSFKL…ANIRKATSRK (107 aa). The segment covering 111–136 has biased composition (basic residues); sequence LSKKVLPKSTRRKANKSASAKTKKLV. S143 is subject to Phosphoserine. Over residues 148 to 157 the composition is skewed to basic residues; that stretch reads KTNKRAKKPR. T159 is subject to Phosphothreonine. Residues 163–175 show a composition bias toward basic residues; sequence KAVRSGRKAKGAK. Phosphoserine occurs at positions 167 and 182. Residues 187-208 are compositionally biased toward basic residues; that stretch reads RATKPKLTQHHKANIRKATSRK.

Belongs to the histone H1/H5 family. In terms of processing, phosphorylated in early spermatids. Citrullination at Arg-58 (H1R54ci) by PADI4 takes place within the DNA-binding site of H1 and results in its displacement from chromatin and global chromatin decondensation, thereby promoting pluripotency and stem cell maintenance.

Testis-specific histone H1 that forms less compacted chromatin compared to other H1 histone subtypes. Formation of more relaxed chromatin may be required to promote chromatin architecture required for proper chromosome regulation during meiosis, such as homologous recombination. Histones H1 act as linkers that bind to nucleosomes and compact polynucleosomes into a higher-order chromatin configuration. The sequence is that of Histone H1t from Macaca mulatta (Rhesus macaque).